Consider the following 485-residue polypeptide: NADH-quinone oxidoreductase subunit N (485 aa).

14 helical membrane-spanning segments follow: residues Ile-10–Leu-30, Ile-40–Ile-60, Val-71–Val-91, Gly-107–His-127, Leu-129–Ile-149, Phe-164–Met-184, Phe-209–Pro-229, Ile-248–Gly-268, Trp-276–Leu-296, Leu-304–Pro-324, Val-336–Gly-356, Ala-377–Ile-397, Gly-410–Val-430, and Leu-454–Leu-474.

It belongs to the complex I subunit 2 family. NDH-1 is composed of 14 different subunits. Subunits NuoA, H, J, K, L, M, N constitute the membrane sector of the complex.

Its subcellular location is the cell inner membrane. It carries out the reaction a quinone + NADH + 5 H(+)(in) = a quinol + NAD(+) + 4 H(+)(out). NDH-1 shuttles electrons from NADH, via FMN and iron-sulfur (Fe-S) centers, to quinones in the respiratory chain. The immediate electron acceptor for the enzyme in this species is believed to be ubiquinone. Couples the redox reaction to proton translocation (for every two electrons transferred, four hydrogen ions are translocated across the cytoplasmic membrane), and thus conserves the redox energy in a proton gradient. This is NADH-quinone oxidoreductase subunit N from Francisella tularensis subsp. holarctica (strain FTNF002-00 / FTA).